The chain runs to 559 residues: Frizzled-1 (559 aa).

Positions 1-35 are cleaved as a signal peptide; it reads MKHSHLLQRCSAQLCTRGSSLILSLLLSVCLSVEG. Residues 36 to 239 are Extracellular-facing; it reads QYNGEKGISI…FAPEELNFAR (204 aa). Residues 46–165 enclose the FZ domain; sequence PDHGYCQPIS…NGAGELCVGQ (120 aa). 5 disulfides stabilise this stretch: cysteine 51–cysteine 112, cysteine 59–cysteine 105, cysteine 96–cysteine 133, cysteine 122–cysteine 162, and cysteine 126–cysteine 150. An N-linked (GlcNAc...) asparagine glycan is attached at asparagine 65. Asparagine 166 is a glycosylation site (N-linked (GlcNAc...) asparagine). The chain crosses the membrane as a helical span at residues 240-260; it reads IWIGIWSVLCCASTLFTVLTY. Over 261 to 273 the chain is Cytoplasmic; that stretch reads LVDMKRFSYPERP. The helical transmembrane segment at 274 to 294 threads the bilayer; that stretch reads IIFLSGCYTMVAIAYIAGFLL. The Extracellular segment spans residues 295–321; sequence EDKVVCNERFAEDGYKTVAQGTKKEGC. Residues 322–342 form a helical membrane-spanning segment; the sequence is TFLFMMLYFFSMASSIWWVIL. The Cytoplasmic portion of the chain corresponds to 343–364; sequence SLTWFLAAGMKWGHEAIEANSQ. Residues 365–385 form a helical membrane-spanning segment; the sequence is YFHLAAWAVPAIKTITILAVG. At 386-408 the chain is on the extracellular side; it reads QVDGDTLSGVCFVGINNVDALRG. The helical transmembrane segment at 409 to 429 threads the bilayer; that stretch reads FVLAPLFVYLFIGTSFLLAGF. Topologically, residues 430–455 are cytoplasmic; sequence VSLFRIRTIMKHDGTKTEKLEKLMVR. A helical transmembrane segment spans residues 456 to 476; that stretch reads IGIFSVLYTVPATIVIACYFY. Residues 477-513 are Extracellular-facing; sequence EQAFREQWEKSWISQSCKTYAIPCPSTGHPPMSPDFT. Residues 514–534 traverse the membrane as a helical segment; that stretch reads VFMIKYLMTLIVGITSGFWIW. Residues 535–559 lie on the Cytoplasmic side of the membrane; the sequence is SGKTLNSWRKFYTRLTNSKQGETTV. Residues 537–542 carry the Lys-Thr-X-X-X-Trp motif, mediates interaction with the PDZ domain of Dvl family members motif; the sequence is KTLNSW. A PDZ-binding motif is present at residues 557 to 559; it reads TTV.

This sequence belongs to the G-protein coupled receptor Fz/Smo family. In terms of assembly, interacts with wnt8. In the embryo, expressed in the heart, pronephros and otic vesicles.

Its subcellular location is the cell membrane. Functionally, receptor for Wnt proteins. Functions in the canonical Wnt/beta-catenin signaling pathway. The canonical Wnt/beta-catenin signaling pathway leads to the activation of disheveled proteins, inhibition of GSK-3 kinase, nuclear accumulation of beta-catenin and activation of Wnt target genes. A second signaling pathway involving PKC and calcium fluxes has been seen for some family members, but it is not yet clear if it represents a distinct pathway or if it can be integrated in the canonical pathway, as PKC seems to be required for Wnt-mediated inactivation of GSK-3 kinase. Both pathways seem to involve interactions with G-proteins. May be involved in transduction and intercellular transmission of polarity information during tissue morphogenesis and/or in differentiated tissues. In Xenopus laevis (African clawed frog), this protein is Frizzled-1 (fzd1).